The primary structure comprises 123 residues: Large ribosomal subunit protein bL12 (123 aa).

This sequence belongs to the bacterial ribosomal protein bL12 family. Homodimer. Part of the ribosomal stalk of the 50S ribosomal subunit. Forms a multimeric L10(L12)X complex, where L10 forms an elongated spine to which 2 to 4 L12 dimers bind in a sequential fashion. Binds GTP-bound translation factors.

Functionally, forms part of the ribosomal stalk which helps the ribosome interact with GTP-bound translation factors. Is thus essential for accurate translation. The sequence is that of Large ribosomal subunit protein bL12 from Ectopseudomonas mendocina (strain ymp) (Pseudomonas mendocina).